The sequence spans 244 residues: Carbonic anhydrase (244 aa).

A signal peptide spans 1-19 (MKGKFSIALMLSACFSASA). The 222-residue stretch at 23-244 (VHWGYEGSGD…QPLNGRIIIH (222 aa)) folds into the Alpha-carbonic anhydrase domain. Cys-46 and Cys-199 are oxidised to a cystine. The active-site Proton acceptor is the His-84. His-109, His-111, and His-128 together coordinate Zn(2+). Residue 195-196 (TT) coordinates substrate.

It belongs to the alpha-carbonic anhydrase family. Zn(2+) serves as cofactor.

The protein resides in the periplasm. It carries out the reaction hydrogencarbonate + H(+) = CO2 + H2O. Its function is as follows. Reversible hydration of carbon dioxide. The protein is Carbonic anhydrase (cah) of Pectobacterium atrosepticum (strain SCRI 1043 / ATCC BAA-672) (Erwinia carotovora subsp. atroseptica).